Consider the following 138-residue polypeptide: Calmodulin-beta (138 aa).

EF-hand domains follow at residues 1-32 (EFKEAFSLFDKDGDGTITTKELGTVMRSLGQN), 33-68 (PTEAELQDMINEVDADGNGTIDFPEFLTMMARKMKE), 70-105 (DSEEEIREAFRVFDKDGNGFISAAELRHVMTNLGEK), and 106-138 (LTDEEVDEMIREADIDGDGQVNYEEFVAMMTSK). 19 residues coordinate Ca(2+): D10, D12, D14, T16, E21, D46, D48, N50, T52, E57, D83, D85, N87, E94, D119, D121, D123, Q125, and E130.

Belongs to the calmodulin family.

Functionally, calmodulin mediates the control of a large number of enzymes, ion channels and other proteins by Ca(2+). Among the enzymes to be stimulated by the calmodulin-Ca(2+) complex are a number of protein kinases and phosphatases. The sequence is that of Calmodulin-beta from Arbacia punctulata (Punctuate sea urchin).